Reading from the N-terminus, the 199-residue chain is Large ribosomal subunit protein eL13B (199 aa).

Residues T144 and T152 each carry the phosphothreonine modification.

This sequence belongs to the eukaryotic ribosomal protein eL13 family. As to quaternary structure, component of the large ribosomal subunit (LSU). Mature yeast ribosomes consist of a small (40S) and a large (60S) subunit. The 40S small subunit contains 1 molecule of ribosomal RNA (18S rRNA) and 33 different proteins (encoded by 57 genes). The large 60S subunit contains 3 rRNA molecules (25S, 5.8S and 5S rRNA) and 46 different proteins (encoded by 81 genes).

The protein localises to the cytoplasm. In terms of biological role, component of the ribosome, a large ribonucleoprotein complex responsible for the synthesis of proteins in the cell. The small ribosomal subunit (SSU) binds messenger RNAs (mRNAs) and translates the encoded message by selecting cognate aminoacyl-transfer RNA (tRNA) molecules. The large subunit (LSU) contains the ribosomal catalytic site termed the peptidyl transferase center (PTC), which catalyzes the formation of peptide bonds, thereby polymerizing the amino acids delivered by tRNAs into a polypeptide chain. The nascent polypeptides leave the ribosome through a tunnel in the LSU and interact with protein factors that function in enzymatic processing, targeting, and the membrane insertion of nascent chains at the exit of the ribosomal tunnel. The polypeptide is Large ribosomal subunit protein eL13B (Saccharomyces cerevisiae (strain ATCC 204508 / S288c) (Baker's yeast)).